Here is a 342-residue protein sequence, read N- to C-terminus: Galactose mutarotase (342 aa).

A2 carries the post-translational modification N-acetylalanine. S14 is subject to Phosphoserine. Beta-D-galactose contacts are provided by residues 81-82 and H107; that span reads NR. S124 carries the post-translational modification Phosphoserine. The active-site Proton donor is H176. Residues 176–178, D243, Q279, and E307 contribute to the beta-D-galactose site; that span reads HSY. The active-site Proton acceptor is E307.

The protein belongs to the aldose epimerase family. Monomer.

The protein resides in the cytoplasm. It catalyses the reaction alpha-D-galactose = beta-D-galactose. The catalysed reaction is alpha-D-glucose = beta-D-glucose. It participates in carbohydrate metabolism; hexose metabolism. It functions in the pathway carbohydrate metabolism; galactose metabolism. Functionally, mutarotase that catalyzes the interconversion of beta-D-galactose and alpha-D-galactose during galactose metabolism. Beta-D-galactose is metabolized in the liver into glucose 1-phosphate, the primary metabolic fuel, by the action of four enzymes that constitute the Leloir pathway: GALM, GALK1 (galactokinase), GALT (galactose-1-phosphate uridylyltransferase) and GALE (UDP-galactose-4'-epimerase). Involved in the maintenance of the equilibrium between the beta- and alpha-anomers of galactose, therefore ensuring a sufficient supply of the alpha-anomer for GALK1. Also active on D-glucose although shows a preference for galactose over glucose. The protein is Galactose mutarotase of Homo sapiens (Human).